The sequence spans 485 residues: Glutamate mutase epsilon subunit (485 aa).

Position 100 (Arg-100) interacts with L-glutamate. Adenosylcob(III)alamin is bound at residue Asn-123. L-glutamate is bound by residues 149 to 150 (KH) and Asp-171. The adenosylcob(III)alamin site is built by Pro-180, Phe-297, Lys-326, and Glu-330.

The protein belongs to the methylaspartate mutase GlmE subunit family. Heterotetramer composed of 2 epsilon subunits (GlmE) and 2 sigma subunits (GlmS). GlmE exists as a homodimer and GlmS as a monomer. The cofactor is adenosylcob(III)alamin.

The enzyme catalyses (2S,3S)-3-methyl-L-aspartate = L-glutamate. It participates in amino-acid degradation; L-glutamate degradation via mesaconate pathway; acetate and pyruvate from L-glutamate: step 1/4. Functionally, catalyzes the carbon skeleton rearrangement of L-glutamate to L-threo-3-methylaspartate ((2S,3S)-3-methylaspartate). This chain is Glutamate mutase epsilon subunit, found in Fusobacterium nucleatum subsp. nucleatum (strain ATCC 25586 / DSM 15643 / BCRC 10681 / CIP 101130 / JCM 8532 / KCTC 2640 / LMG 13131 / VPI 4355).